The primary structure comprises 145 residues: MLHTIKPVANARKTTKRLGRGPGSGTGKTSGKGHKGQLARSGKTLRPGFEGGQIPFFQRIPKRGFHNFAQKKYAVLNLTTLQNFPEDSVITPQLLLEKKIIKDPLSGIKVLGQGTLTKKLVVKASKFSRQAEASILAVGGKIEVI.

A disordered region spans residues 1–50; that stretch reads MLHTIKPVANARKTTKRLGRGPGSGTGKTSGKGHKGQLARSGKTLRPGFE. The span at 20–30 shows a compositional bias: gly residues; that stretch reads RGPGSGTGKTS.

The protein belongs to the universal ribosomal protein uL15 family. Part of the 50S ribosomal subunit.

Functionally, binds to the 23S rRNA. This is Large ribosomal subunit protein uL15 from Phytoplasma australiense.